The sequence spans 217 residues: Translation initiation factor 6 (217 aa).

The protein belongs to the eIF-6 family.

Binds to the 50S ribosomal subunit and prevents its association with the 30S ribosomal subunit to form the 70S initiation complex. This Methanococcoides burtonii (strain DSM 6242 / NBRC 107633 / OCM 468 / ACE-M) protein is Translation initiation factor 6.